Here is a 1092-residue protein sequence, read N- to C-terminus: Isoleucine--tRNA ligase (1092 aa).

Positions 53 to 63 (PFANGLPHYGH) match the 'HIGH' region motif. The 'KMSKS' region motif lies at 613–617 (KLSKR). K616 serves as a coordination point for ATP.

The protein belongs to the class-I aminoacyl-tRNA synthetase family. IleS type 2 subfamily. In terms of assembly, monomer. It depends on Zn(2+) as a cofactor.

It is found in the cytoplasm. The catalysed reaction is tRNA(Ile) + L-isoleucine + ATP = L-isoleucyl-tRNA(Ile) + AMP + diphosphate. Functionally, catalyzes the attachment of isoleucine to tRNA(Ile). As IleRS can inadvertently accommodate and process structurally similar amino acids such as valine, to avoid such errors it has two additional distinct tRNA(Ile)-dependent editing activities. One activity is designated as 'pretransfer' editing and involves the hydrolysis of activated Val-AMP. The other activity is designated 'posttransfer' editing and involves deacylation of mischarged Val-tRNA(Ile). In Rickettsia africae (strain ESF-5), this protein is Isoleucine--tRNA ligase.